A 141-amino-acid chain; its full sequence is LOB domain-containing protein 34 (141 aa).

The LOB domain maps to 16–119; that stretch reads NQCAACRHQR…SPLNYVAPVI (104 aa).

It belongs to the LOB domain-containing protein family.

This Arabidopsis thaliana (Mouse-ear cress) protein is LOB domain-containing protein 34 (LBD34).